Consider the following 443-residue polypeptide: Tol-Pal system protein TolB (443 aa).

An N-terminal signal peptide occupies residues 1-18 (MRNIVYFILTLFSLTSYA).

Belongs to the TolB family. In terms of assembly, the Tol-Pal system is composed of five core proteins: the inner membrane proteins TolA, TolQ and TolR, the periplasmic protein TolB and the outer membrane protein Pal. They form a network linking the inner and outer membranes and the peptidoglycan layer.

Its subcellular location is the periplasm. Its function is as follows. Part of the Tol-Pal system, which plays a role in outer membrane invagination during cell division and is important for maintaining outer membrane integrity. This is Tol-Pal system protein TolB from Rickettsia prowazekii (strain Madrid E).